The following is a 187-amino-acid chain: MATPTFDLADIKRRMQGAVNSLKHDLGSLRTGRASPTLLDPIQVEAYGAAMPMAQVATISVPEPRLLSVAVWDRGMVSAVEKAIRESDLGLNPMTEGQTIRLRIPEMNEQRRKEMVKVAHKYAEEARVAVRHVRRDGLDLLKKLEKDGAISQDDEKRQADQVQKVTDQHIAEVDQTLAAKEKEIMQV.

The protein belongs to the RRF family.

It localises to the cytoplasm. Responsible for the release of ribosomes from messenger RNA at the termination of protein biosynthesis. May increase the efficiency of translation by recycling ribosomes from one round of translation to another. This Methylobacterium sp. (strain 4-46) protein is Ribosome-recycling factor.